Consider the following 311-residue polypeptide: Pyrimidine-specific ribonucleoside hydrolase RihA (311 aa).

The active site involves H240.

Belongs to the IUNH family. RihA subfamily.

Its function is as follows. Hydrolyzes cytidine or uridine to ribose and cytosine or uracil, respectively. This Salmonella agona (strain SL483) protein is Pyrimidine-specific ribonucleoside hydrolase RihA.